The primary structure comprises 115 residues: NADH-ubiquinone oxidoreductase chain 3 (115 aa).

The next 3 membrane-spanning stretches (helical) occupy residues 3–23 (IMLT…IAFW), 55–75 (FFLV…LLPL), and 86–106 (TMLT…AYEW).

The protein belongs to the complex I subunit 3 family. As to quaternary structure, core subunit of respiratory chain NADH dehydrogenase (Complex I) which is composed of 45 different subunits. Interacts with TMEM186. Interacts with TMEM242.

It is found in the mitochondrion inner membrane. The enzyme catalyses a ubiquinone + NADH + 5 H(+)(in) = a ubiquinol + NAD(+) + 4 H(+)(out). Its function is as follows. Core subunit of the mitochondrial membrane respiratory chain NADH dehydrogenase (Complex I) which catalyzes electron transfer from NADH through the respiratory chain, using ubiquinone as an electron acceptor. Essential for the catalytic activity of complex I. In Sus scrofa (Pig), this protein is NADH-ubiquinone oxidoreductase chain 3.